The chain runs to 697 residues: MRQILVTSALPYANGPIHLGHLVEYIQTDIWVRAMKAQSHQVTYVCADDAHGTAIMLKAEANGVTPEQQIATVKASHEADFSKFLIGFDNYHSTHSEENRELSELIYRRLNGEGHISTKDVEQLFDPEKGLFLADRFVKGECPECGAQDQYGDNCEVCGTTYNATELKNPYSTLSGATPVLRTSKHYFFNLPEFESFLKQWTKDEGRLQPSVSNKLQEWFEAGLASWDISRDAPYFGFKIPDTPEGEPDKYFYVWLDAPVGYMASFKNLCKQRQGSTDPQQPELSFDDYWLQENQHKTELYHFIGKDIVYFHALFWPAMLAGSEYRTPTGVFAHGFLMVNGDKMSKSRGTFIQAETFAKHLNPEYLRYYFASKLSEKVEDINLDFADFMQKVNSDMVGKVVNIASRSAGFIAKKYDGMLSDSCAEPELLNEIVRAGEEIATAYENREFSRAMRLIMQCADKANEYIDSKKPWAMAKEEGREQEVQDVCTVAINIFRQLMVYLAPVLPELTDNAKAFLNIDDLSFASRHELLLGHKINKFKPLMQRIEQAQIDAMVADSKQDLLATPTAQADNVAKAAQASETNDQQDSDYIEFDDFMKVEMTVAQVLECNHVEGADKLLQFTLDIGKEQPINVFSGIRKFYEPEQLANKKVICVTNLAPRKMKFGVSEGMILSSGDPKTGLVVITLPDECKVGDKLA.

The short motif at 11-21 is the 'HIGH' region element; the sequence is PYANGPIHLGH. C142, C145, C155, and C158 together coordinate Zn(2+). A 'KMSKS' region motif is present at residues 343 to 347; it reads KMSKS. K346 lines the ATP pocket. The tRNA-binding domain maps to 595–697; the sequence is DFMKVEMTVA…DECKVGDKLA (103 aa).

It belongs to the class-I aminoacyl-tRNA synthetase family. MetG type 1 subfamily. Homodimer. The cofactor is Zn(2+).

The protein resides in the cytoplasm. It catalyses the reaction tRNA(Met) + L-methionine + ATP = L-methionyl-tRNA(Met) + AMP + diphosphate. Functionally, is required not only for elongation of protein synthesis but also for the initiation of all mRNA translation through initiator tRNA(fMet) aminoacylation. The chain is Methionine--tRNA ligase from Psychrobacter sp. (strain PRwf-1).